The chain runs to 223 residues: Glutathione S-transferase 4 (223 aa).

Alanine 2 bears the Blocked amino end (Ala) mark. Residues 4–85 form the GST N-terminal domain; sequence PAVKVYGWAI…HVLRKHKPEL (82 aa). Glutathione-binding positions include serine 14, 43-44, 56-57, and 69-70; these read HR, KV, and ES. The region spanning 90-223 is the GST C-terminal domain; it reads RLEQTAMVDV…VGAGAPKEQE (134 aa).

Belongs to the GST superfamily. Phi family. As to quaternary structure, homodimer or heterodimer of GST-I and GST-IV (=GST-II). As to expression, seedling roots.

It catalyses the reaction RX + glutathione = an S-substituted glutathione + a halide anion + H(+). Functionally, conjugation of reduced glutathione to a wide number of exogenous and endogenous hydrophobic electrophiles. Involved in the detoxification of certain herbicides. Most active with substrates possessing a chloroacetamide structure. Trans-cinnamic acid and 1-chloro-2,4-dinitrobenzene are not effective substrates. May play an important role in the benoxacor-mediated protection of maize from metolachlor injury. In Zea mays (Maize), this protein is Glutathione S-transferase 4 (GST4).